Here is a 273-residue protein sequence, read N- to C-terminus: Cysteine protease S273R (273 aa).

Active-site residues include His168 and Asn187. Residue Gln226 coordinates substrate. Cys232 serves as the catalytic Nucleophile.

It belongs to the peptidase C63 family.

It localises to the host cytoplasm. The protein localises to the virion. Its function is as follows. Cysteine protease that plays several role during infection including processing of the structural polyprotein or inhibition of the host immune response. Catalyzes the maturation of the pp220 and pp62 polyprotein precursors into core-shell proteins. Plays a role in the disruption of host pyroptosis via specific cleavage of gasdermin D/GSDMD. In addition, strongly decreases the host cGAS-STING signaling by targeting IKBKE via its enzymatic activity. Also impairs host FOXJ1-mediated antiviral effect via degradation of FOXJ1. Cleaves host G3BP1 inducing loss of stress granules formation. Interacts with and induces the degradation of host STAT2 via polyubiquitination of the latter. In Ornithodoros (relapsing fever ticks), this protein is Cysteine protease S273R.